The chain runs to 199 residues: Histone deacetylase complex subunit SAP25 (199 aa).

Polar residues-rich tracts occupy residues 151–163 (QMSQ…SSSA) and 184–199 (QGAD…THCP). Positions 151–199 (QMSQGEPRPSSSAVGPPDHTSDPPSPCGSPSSSQGADLSLPQTPDTHCP) are disordered.

May be a component of the mSIN3A corepressor complex. Interacts with SIN3A. Interacts with HDAC2.

The protein resides in the nucleus. It is found in the cytoplasm. In terms of biological role, involved in the transcriptional repression mediated by the mSIN3A but not the N-CoR corepressor complex. The polypeptide is Histone deacetylase complex subunit SAP25 (SAP25) (Homo sapiens (Human)).